A 433-amino-acid chain; its full sequence is Serine hydroxymethyltransferase (433 aa).

Residues leucine 132 and glycine 136–leucine 138 contribute to the (6S)-5,6,7,8-tetrahydrofolate site. Lysine 241 bears the N6-(pyridoxal phosphate)lysine mark.

It belongs to the SHMT family. As to quaternary structure, homodimer. The cofactor is pyridoxal 5'-phosphate.

Its subcellular location is the cytoplasm. It catalyses the reaction (6R)-5,10-methylene-5,6,7,8-tetrahydrofolate + glycine + H2O = (6S)-5,6,7,8-tetrahydrofolate + L-serine. It participates in one-carbon metabolism; tetrahydrofolate interconversion. Its pathway is amino-acid biosynthesis; glycine biosynthesis; glycine from L-serine: step 1/1. In terms of biological role, catalyzes the reversible interconversion of serine and glycine with tetrahydrofolate (THF) serving as the one-carbon carrier. This reaction serves as the major source of one-carbon groups required for the biosynthesis of purines, thymidylate, methionine, and other important biomolecules. Also exhibits THF-independent aldolase activity toward beta-hydroxyamino acids, producing glycine and aldehydes, via a retro-aldol mechanism. This is Serine hydroxymethyltransferase from Methylobacterium sp. (strain 4-46).